A 436-amino-acid polypeptide reads, in one-letter code: MCVVFSPRETVSELDRFIIGQSDAKRSVAIALRNRWRRQQLDGPMRDEVMPKNILMIGPTGVGKTGIARRLAKLAGAPFVKVEATKFTEVGYVGRDVEQIIRDLVEIAISLVREKKRDEVKVKAHINAEERVLDALVGKTASPATRESFRKKLRDGELDEKEIEIEVSDNNSNSTSTFDIPGMPGAQMGIMNLSEIFGKMGNRTKVRKTTVKDAFKPLIDDESEKLLDQDQIIQEALRVAENDGIVFIDEIDKIATRDGGASAAVSREGVQRDLLPLVEGTTIATKYGQIKTDHILFIASGAFHVSKPSDLLPELQGRLPIRVELNPLTREDLRRILTEPEASLIKQYIALMATEEVHLEITDDAIDALADIAVDLNARIENIGARRLQTVMERVLDEISFTAPDKAGTSFKVDAAYVKKSIGDLAADVDLSRFIL.

Residues Ile19, 61–65 (GVGKT), Asp249, Glu314, and Arg386 each bind ATP.

This sequence belongs to the ClpX chaperone family. HslU subfamily. In terms of assembly, a double ring-shaped homohexamer of HslV is capped on each side by a ring-shaped HslU homohexamer. The assembly of the HslU/HslV complex is dependent on binding of ATP.

Its subcellular location is the cytoplasm. Its function is as follows. ATPase subunit of a proteasome-like degradation complex; this subunit has chaperone activity. The binding of ATP and its subsequent hydrolysis by HslU are essential for unfolding of protein substrates subsequently hydrolyzed by HslV. HslU recognizes the N-terminal part of its protein substrates and unfolds these before they are guided to HslV for hydrolysis. This is ATP-dependent protease ATPase subunit HslU from Bartonella henselae (strain ATCC 49882 / DSM 28221 / CCUG 30454 / Houston 1) (Rochalimaea henselae).